We begin with the raw amino-acid sequence, 252 residues long: tRNA (guanine-N(1)-)-methyltransferase (252 aa).

Residues Gly118 and Ile138 to Leu143 contribute to the S-adenosyl-L-methionine site.

The protein belongs to the RNA methyltransferase TrmD family. Homodimer.

It is found in the cytoplasm. It carries out the reaction guanosine(37) in tRNA + S-adenosyl-L-methionine = N(1)-methylguanosine(37) in tRNA + S-adenosyl-L-homocysteine + H(+). Specifically methylates guanosine-37 in various tRNAs. This chain is tRNA (guanine-N(1)-)-methyltransferase, found in Pseudomonas aeruginosa (strain UCBPP-PA14).